A 430-amino-acid chain; its full sequence is Argininosuccinate lyase (430 aa).

It belongs to the lyase 1 family. Argininosuccinate lyase subfamily.

The protein localises to the cytoplasm. It carries out the reaction 2-(N(omega)-L-arginino)succinate = fumarate + L-arginine. The protein operates within amino-acid biosynthesis; L-arginine biosynthesis; L-arginine from L-ornithine and carbamoyl phosphate: step 3/3. The protein is Argininosuccinate lyase of Sorangium cellulosum (strain So ce56) (Polyangium cellulosum (strain So ce56)).